Here is a 209-residue protein sequence, read N- to C-terminus: Aspartate kinase-like protein lolA1 (209 aa).

Residues 1 to 11 (MLDESPMRKGD) show a composition bias toward basic and acidic residues. A disordered region spans residues 1-27 (MLDESPMRKGDSVSNDQSNPESNASVS). The segment covering 12 to 27 (SVSNDQSNPESNASVS) has biased composition (polar residues).

This sequence belongs to the aspartokinase family.

Its pathway is alkaloid biosynthesis. Aspartokinase-like protein; part of the gene cluster that mediates the biosynthesis of loline alkaloids, potent insecticidal agents composed of a pyrrolizidine ring system and an uncommon ether bridge linking carbons 2 and 7. Lolines are structurally differentiated by the various modifications of the L-amino group and include norloline, loline, N-methylloline, N-acetylloline, N-acetylnorloline, and N-formylloline. The first committed step is the condensation of O-acetyl-L-homoserine (derived from L-aspartic acid) and L-proline, probably catalyzed by the gamma-type pyridoxal 5'-phosphate(PLP)-dependent enzyme lolC, to give the diamino diacid, NACPP. Ensuing cyclization, decarboxylation, and acetylation steps yield 1-exo-acetamidopyrrolizidine (AcAP). LolO is required for installation of the ether bridge upon the pathway intermediate, 1-exo-acetamidopyrrolizidine (AcAP). In sequential 2-oxoglutarate- and O(2)-consuming steps, lolO removes hydrogens from C2 and C7 of AcAP to form both carbon-oxygen bonds in N-acetylnorloline (NANL), the precursor to all other lolines. The enzymes lolD, lolE, lolF and lolT have also been proposed to be involved in the ether-bridge installation. Further processing of the exocyclic moiety of NANL by fungal N-acetamidase (LolN), methyltransferase (LolM), and cytochrome P450 (LolP) enzymes, with occasional involvement of a plant acetyltransferase, generates the other known lolines. LolN transforms NANL to norlonine which is monomethylated and dimethylated to respectively lonine and N-methyllonine (NML) by lolM. LolP catalyzes hydroxylation of the methyl group in N-methylloline (NML) and further oxygenation to N-formylloline (NFL). A plant acetyltransferase is responsible for the acetylation of loline to form N-acetylloline (NAL). LolA might interact with aspartate kinase to prevent feedback inhibition of its activity by these end products and thereby promote production of L-homoserine from L-aspartate. This Epichloe uncinata (Endophyte fungus) protein is Aspartate kinase-like protein lolA1.